The following is a 716-amino-acid chain: ATP-dependent DNA helicase DinG (716 aa).

A Helicase ATP-binding domain is found at 17 to 294; sequence ALQEQIPDFI…TCMEQFRPKT (278 aa). 54-61 serves as a coordination point for ATP; it reads APTGVGKT. Cys120 is a [4Fe-4S] cluster binding site. The short motif at 131–134 is the DEAH box element; sequence EPTQ. Residues Cys194, Cys199, and Cys205 each contribute to the [4Fe-4S] cluster site. The short motif at 248-251 is the DEAH box element; sequence DEGH. A Helicase C-terminal domain is found at 517–698; sequence HIAEMAAFFR…VFPIEQPEVP (182 aa).

It belongs to the helicase family. DinG subfamily. Type 1 sub-subfamily. Requires [4Fe-4S] cluster as cofactor.

It catalyses the reaction Couples ATP hydrolysis with the unwinding of duplex DNA at the replication fork by translocating in the 5'-3' direction. This creates two antiparallel DNA single strands (ssDNA). The leading ssDNA polymer is the template for DNA polymerase III holoenzyme which synthesizes a continuous strand.. The catalysed reaction is ATP + H2O = ADP + phosphate + H(+). DNA-dependent ATPase and 5'-3' DNA helicase. Unwinds D-loops, R-loops, forked DNA and G-quadruplex DNA. The polypeptide is ATP-dependent DNA helicase DinG (Escherichia coli O6:H1 (strain CFT073 / ATCC 700928 / UPEC)).